Reading from the N-terminus, the 391-residue chain is Serine protease 7 (391 aa).

Residues Met-1–Ala-27 form the signal peptide. The propeptide at Gln-28 to Lys-136 is activation peptide. The Clip domain maps to Ser-30–Cys-84. Intrachain disulfides connect Cys-31–Cys-83, Cys-41–Cys-72, and Cys-47–Cys-84. The disordered stretch occupies residues Gly-91–Leu-121. Cystine bridges form between Cys-128/Cys-264, Cys-167/Cys-183, Cys-211/Cys-216, Cys-310/Cys-327, and Cys-337/Cys-366. Residues Val-137–Arg-390 form the Peptidase S1 domain. N-linked (GlcNAc...) asparagine glycosylation occurs at Asn-141. Residue His-182 is the Charge relay system of the active site. Positions 202, 204, 207, and 210 each coordinate Ca(2+). Catalysis depends on Asp-244, which acts as the Charge relay system. Ser-341 (charge relay system) is an active-site residue.

The protein belongs to the peptidase S1 family. CLIP subfamily. In terms of assembly, interacts with Spn27A.

It localises to the secreted. Its function is as follows. Serine protease that, by cleaving and activating prophenoloxidase (PPO1) after immune challenge, plays an essential role in the melanization immune response to septic wounding. May function in diverse Hayan-dependent PPO1-activating cascades that are negatively controlled by different serpin proteins; Spn27A in the hemolymph and Spn77BA in the trachea. Important for the innate immune response to fungi. Regulation of melanization and PPO1 activation appears to be largely independent of the Toll signaling pathway. The chain is Serine protease 7 from Drosophila melanogaster (Fruit fly).